Here is a 268-residue protein sequence, read N- to C-terminus: Esterase GME11355 (268 aa).

Residues S122, D212, and H240 each act as charge relay system in the active site.

It belongs to the LovG family.

Its pathway is secondary metabolite biosynthesis. In terms of biological role, esterase; part of the gene cluster that mediates the biosynthesis of dibenzodioxocinones such as pestalotiollide B, a novel class of inhibitors against cholesterol ester transfer protein (CEPT). The biosynthesis initiates from condensation of acetate and malonate units catalyzed by the non-reducing PKS pks8/GME11356. Pks8/GME11356 lacks a thioesterase (TE) domain, which is important to the cyclizing of the third ring of atrochrysone carboxylic acid, and the esterase GME11355 might play the role of TE and catalyzes the cyclization reaction of the C ring. The lactamase-like protein GME11357 (or other beta-lactamases in Pestalotiopsis microspora) probably hydrolyzes the thioester bond between the ACP of pks8/GME11356 and the intermediate to release atrochrysone carboxylic acid, which is spontaneously dehydrates to form endocrocin anthrone. Endocrocin anthrone is further converted to emodin via the endocrocin intermediate. Emodin is then oxidized by several enzymes such as the Baeyer-Villiger oxidase GME11358, the oxidoreductase GME11367, the short chain dehydrogenase/reductase GME11373, as well as by other oxidoreductases from the cluster, to modify the A and C rings and open the B ring, and finally yield monodictyphenone. The prenyltransferase GME11375 may catalyze the addition reaction between the C5 side chains and the carbon bone of dibenzodioxocinones. The remaining biochemical reactions to the final product dibenzodioxocinones should be methylation catalyzed by methyltransferase GME11366 and reduction and lactonization reaction catalyzed by a series of oxidordeuctases. In Pestalotiopsis microspora, this protein is Esterase GME11355.